We begin with the raw amino-acid sequence, 427 residues long: Adenylosuccinate synthetase (427 aa).

GTP is bound by residues 12 to 18 (GDEGKGK) and 40 to 42 (GHT). D13 functions as the Proton acceptor in the catalytic mechanism. Residues D13 and G40 each contribute to the Mg(2+) site. IMP-binding positions include 13 to 16 (DEGK), 38 to 41 (NAGH), T128, R142, Q223, T238, and R302. H41 serves as the catalytic Proton donor. Residue 298–304 (TTTGRPR) participates in substrate binding. GTP-binding positions include R304, 330-332 (KLD), and 412-414 (SVG).

This sequence belongs to the adenylosuccinate synthetase family. In terms of assembly, homodimer. The cofactor is Mg(2+).

Its subcellular location is the cytoplasm. It catalyses the reaction IMP + L-aspartate + GTP = N(6)-(1,2-dicarboxyethyl)-AMP + GDP + phosphate + 2 H(+). It participates in purine metabolism; AMP biosynthesis via de novo pathway; AMP from IMP: step 1/2. Functionally, plays an important role in the de novo pathway of purine nucleotide biosynthesis. Catalyzes the first committed step in the biosynthesis of AMP from IMP. The polypeptide is Adenylosuccinate synthetase (Carboxydothermus hydrogenoformans (strain ATCC BAA-161 / DSM 6008 / Z-2901)).